The primary structure comprises 154 residues: Transcriptional repressor NrdR (154 aa).

A zinc finger spans residues 3-34 (CPFCRHPDSRVVDSRETDEGQAIRRRRSCPEC). The region spanning 46–136 (LAVVKRSGVT…VYRSFSSAED (91 aa)) is the ATP-cone domain.

Belongs to the NrdR family. Zn(2+) is required as a cofactor.

In terms of biological role, negatively regulates transcription of bacterial ribonucleotide reductase nrd genes and operons by binding to NrdR-boxes. The sequence is that of Transcriptional repressor NrdR from Mycolicibacterium gilvum (strain PYR-GCK) (Mycobacterium gilvum (strain PYR-GCK)).